We begin with the raw amino-acid sequence, 194 residues long: PRELI domain containing protein 3B (194 aa).

Residues 1-172 form the PRELI/MSF1 domain; it reads MKIWTSEHVF…VIHKLNAEIE (172 aa). Residues Ser-46 and Ser-51 each carry the phosphoserine modification.

The protein belongs to the slowmo family.

The polypeptide is PRELI domain containing protein 3B (PRELID3B) (Sus scrofa (Pig)).